A 209-amino-acid chain; its full sequence is Adenylate kinase (209 aa).

Position 10 to 15 (10 to 15 (GAGKGT)) interacts with ATP. Residues 30-59 (STGDLFRAAIKEQTDLGKKVKAVIDSGALV) are NMP. AMP is bound by residues T31, R36, 57–59 (ALV), 85–88 (GFPR), and Q92. An LID region spans residues 121-158 (GRRVCSSCGQSFHIEFVKPKKEGICDSCSGDLMIRPDD). R122 contacts ATP. Residues C125 and C128 each coordinate Zn(2+). Residue 131–132 (SF) participates in ATP binding. Residues C145 and C148 each contribute to the Zn(2+) site. R155 and R166 together coordinate AMP. P194 is a binding site for ATP.

The protein belongs to the adenylate kinase family. Monomer.

The protein resides in the cytoplasm. It catalyses the reaction AMP + ATP = 2 ADP. It functions in the pathway purine metabolism; AMP biosynthesis via salvage pathway; AMP from ADP: step 1/1. Catalyzes the reversible transfer of the terminal phosphate group between ATP and AMP. Plays an important role in cellular energy homeostasis and in adenine nucleotide metabolism. In Treponema denticola (strain ATCC 35405 / DSM 14222 / CIP 103919 / JCM 8153 / KCTC 15104), this protein is Adenylate kinase.